Here is a 506-residue protein sequence, read N- to C-terminus: Ecdysteroid UDP-glucosyltransferase (506 aa).

Residues 1–18 (MTAYLIVFCLCCWSAARS) form the signal peptide.

The protein belongs to the UDP-glycosyltransferase family.

Functionally, catalyzes the transfer of glucose from UDP-glucose to ecdysteroids which are insect molting hormones. Expression of egt interferes with normal insect development and block molting. The polypeptide is Ecdysteroid UDP-glucosyltransferase (EGT) (Lymantria dispar multicapsid nuclear polyhedrosis virus (LdMNPV)).